Consider the following 264-residue polypeptide: Segregation and condensation protein A (264 aa).

Belongs to the ScpA family. Component of a cohesin-like complex composed of ScpA, ScpB and the Smc homodimer, in which ScpA and ScpB bind to the head domain of Smc. The presence of the three proteins is required for the association of the complex with DNA.

It localises to the cytoplasm. Its function is as follows. Participates in chromosomal partition during cell division. May act via the formation of a condensin-like complex containing Smc and ScpB that pull DNA away from mid-cell into both cell halves. The sequence is that of Segregation and condensation protein A from Enterococcus faecalis (strain ATCC 700802 / V583).